The following is a 282-amino-acid chain: Uracil-DNA glycosylase (282 aa).

The segment at 15–40 (SAASKRKSASNTENIPEKVPAGNENQ) is disordered. The Proton acceptor role is filled by Asp123.

The protein belongs to the uracil-DNA glycosylase (UDG) superfamily. UNG family.

Its subcellular location is the mitochondrion. It localises to the nucleus. The catalysed reaction is Hydrolyzes single-stranded DNA or mismatched double-stranded DNA and polynucleotides, releasing free uracil.. With respect to regulation, inhibited by UGI, a B.subtilis bacteriophage PBS2 peptide inhibitor. Excises uracil residues from the DNA which can arise as a result of misincorporation of dUMP residues by DNA polymerase or due to deamination of cytosine. The polypeptide is Uracil-DNA glycosylase (Caenorhabditis elegans).